The sequence spans 992 residues: UPF0182 protein MT3285 (992 aa).

7 helical membrane passes run 17 to 39 (RILIMIALGVIVLLLAGPRLIDA), 59 to 81 (LATRIVVCLVAGVVVGGIVFGGL), 113 to 135 (LVGIGIPAAIGLLAGIVAQSYWA), 169 to 191 (LMLSYMLVSVFLAFVANLVAHYI), 212 to 229 (LVSLVGVLVLLKAVAYWL), 255 to 277 (VLPAKLILMAIALICAAAVFSAI), and 284 to 306 (IPAIGLVLLLLSSLIVGAGWPLI). Positions 906–938 (PTEAAVPPSPAANPPPPASGPQPPPVTAAPPVP) are disordered. Residues 912-938 (PPSPAANPPPPASGPQPPPVTAAPPVP) show a composition bias toward pro residues.

Belongs to the UPF0182 family.

The protein resides in the cell membrane. This chain is UPF0182 protein MT3285, found in Mycobacterium tuberculosis (strain CDC 1551 / Oshkosh).